We begin with the raw amino-acid sequence, 304 residues long: Aspartate carbamoyltransferase catalytic subunit (304 aa).

Positions 49 and 50 each coordinate carbamoyl phosphate. Lys-77 serves as a coordination point for L-aspartate. Carbamoyl phosphate contacts are provided by Arg-99, His-127, and Gln-130. Residues Arg-160 and Arg-211 each contribute to the L-aspartate site. Positions 252 and 253 each coordinate carbamoyl phosphate.

It belongs to the aspartate/ornithine carbamoyltransferase superfamily. ATCase family. In terms of assembly, heterododecamer (2C3:3R2) of six catalytic PyrB chains organized as two trimers (C3), and six regulatory PyrI chains organized as three dimers (R2).

It catalyses the reaction carbamoyl phosphate + L-aspartate = N-carbamoyl-L-aspartate + phosphate + H(+). The protein operates within pyrimidine metabolism; UMP biosynthesis via de novo pathway; (S)-dihydroorotate from bicarbonate: step 2/3. Its function is as follows. Catalyzes the condensation of carbamoyl phosphate and aspartate to form carbamoyl aspartate and inorganic phosphate, the committed step in the de novo pyrimidine nucleotide biosynthesis pathway. This Bacillus mycoides (strain KBAB4) (Bacillus weihenstephanensis) protein is Aspartate carbamoyltransferase catalytic subunit.